The sequence spans 1046 residues: SWI/SNF-related matrix-associated actin-dependent regulator of chromatin subfamily A member 1 (1046 aa).

The tract at residues E27 to S61 is disordered. A compositionally biased stretch (low complexity) spans A39–T50. S120 and S123 each carry phosphoserine. Residues I199 to D364 form the Helicase ATP-binding domain. D212–T219 is a binding site for ATP. The short motif at D315–H318 is the DEAH box element. Residues A494–I645 enclose the Helicase C-terminal domain. Glycyl lysine isopeptide (Lys-Gly) (interchain with G-Cter in SUMO2) cross-links involve residues K654, K720, and K742. The tract at residues A819 to E840 is disordered. The span at Q820–G829 shows a compositional bias: basic and acidic residues. The 53-residue stretch at Q847–N899 folds into the SANT 1 domain. The residue at position 946 (Y946) is a Phosphotyrosine. Positions K950–L1014 constitute an SANT 2 domain. Residues E1003–T1037 are a coiled coil. A disordered region spans residues R1025–S1046.

The protein belongs to the SNF2/RAD54 helicase family. ISWI subfamily. In terms of assembly, may form homodimers. Component of the ACF-1 ISWI chromatin remodeling complex at least composed of SMARCA1 and BAZ1A, which regulates the spacing of histone octamers on the DNA template to facilitate access to DNA. Within the complex interacts with BAZ1A; the interaction is direct. Component of the WICH-1 ISWI chromatin remodeling complex at least composed of SMARCA1 and BAZ1B/WSTF. Within the complex interacts with BAZ1B/WSTF. Component of the NoRC-1 ISWI chromatin remodeling complex at least composed of SMARCA1 and BAZ2A/TIP5. Within the complex interacts with BAZ2A/TIP5. Component of the BRF-1 ISWI chromatin remodeling complex at least composed of SMARCA1 and BAZ2B. Within the complex interacts with BAZ2B. Component of the NURF-1 ISWI chromatin remodeling complex (also called the nucleosome-remodeling factor (NURF) complex) at least composed of SMARCA1, BPTF, RBBP4 and RBBP7. Within the complex interacts with BPTF. Within the complex interacts with RBBP4 and RBBP7. Component of the CERF-1 ISWI chromatin remodeling complex (also called the CECR2-containing-remodeling factor (CERF) complex) at least composed of CECR2 and SMARCA1. LUZP1 is detected as part of the CERF-1 complex in embryonic stem cells where it is involved in complex stabilization but is not detected in the complex in the testis. Component of the RSF-1 ISWI chromatin remodeling complex at least composed of SMARCA1 and RSF1. Within the complex interacts with RSF1. Interacts with PRLR. Interacts with ERCC6. Predominantly expressed in cortex, cerebellum, ovaries, testes, uterus and placenta.

It localises to the nucleus. It carries out the reaction ATP + H2O = ADP + phosphate + H(+). Its function is as follows. ATPase that possesses intrinsic ATP-dependent chromatin-remodeling activity. ATPase activity is substrate-dependent, and is increased when nucleosomes are the substrate, but is also catalytically active when DNA alone is the substrate. Catalytic subunit of ISWI chromatin-remodeling complexes, which form ordered nucleosome arrays on chromatin and facilitate access to DNA during DNA-templated processes such as DNA replication, transcription, and repair. Within the ISWI chromatin-remodeling complexes, slides edge- and center-positioned histone octamers away from their original location on the DNA template. Catalytic activity and histone octamer sliding propensity is regulated and determined by components of the ISWI chromatin-remodeling complexes. The BAZ1A-, BAZ1B-, BAZ2A- and BAZ2B-containing ISWI chromatin-remodeling complexes regulate the spacing of nucleosomes along the chromatin and have the ability to slide mononucleosomes to the center of a DNA template. The CECR2- and RSF1-containing ISWI chromatin-remodeling complexes do not have the ability to slide mononucleosomes to the center of a DNA template. Within the NURF-1 and CERF-1 ISWI chromatin remodeling complexes, nucleosomes are the preferred substrate for its ATPase activity. Within the NURF-1 ISWI chromatin-remodeling complex, binds to the promoters of En1 and En2 to positively regulate their expression and promote brain development. May promote neurite outgrowth. May be involved in the development of luteal cells. Facilitates nucleosome assembly during DNA replication, ensuring replication fork progression and genomic stability by preventing replication stress and nascent DNA gaps. This is SWI/SNF-related matrix-associated actin-dependent regulator of chromatin subfamily A member 1 (Smarca1) from Mus musculus (Mouse).